The sequence spans 152 residues: MAKRVQVVLNETVNKLGRMGQVVEVAPGYARNYLFPRGIAEPATPSALRRVERLQEKERQRLAALKSIAEKQKATLEKLATITISMPVGEKDMLFGSVTPQDVADAIQAITGETIDRREMILPEIRKLGTYTAEIKLHPEVTVKLNIQVVAD.

Belongs to the bacterial ribosomal protein bL9 family.

Binds to the 23S rRNA. This chain is Large ribosomal subunit protein bL9, found in Thermosynechococcus vestitus (strain NIES-2133 / IAM M-273 / BP-1).